A 65-amino-acid chain; its full sequence is Defensin-B2 (65 aa).

The N-terminal stretch at 1–23 (MEARVLLLCAVLFLLVHTPPAAG) is a signal peptide. Intrachain disulfides connect Cys29/Cys56, Cys36/Cys50, and Cys40/Cys57.

Belongs to the beta-defensin family. Lowly expressed in spleen, and lung.

The protein localises to the secreted. Has antimicrobial activity. The sequence is that of Defensin-B2 from Ornithorhynchus anatinus (Duckbill platypus).